Consider the following 267-residue polypeptide: Thiamine thiazole synthase (267 aa).

Residues S47, E66–R67, G74, V138, and H164–D166 contribute to the NAD(+) site. Fe cation is bound by residues D166 and H181. Residues S184 and M230 each contribute to the NAD(+) site. R240 serves as a coordination point for glycine.

The protein belongs to the THI4 family. As to quaternary structure, homooctamer; tetramer of dimers. Requires Fe(2+) as cofactor.

It carries out the reaction hydrogen sulfide + glycine + NAD(+) = ADP-5-ethyl-4-methylthiazole-2-carboxylate + nicotinamide + 3 H2O + H(+). The protein operates within cofactor biosynthesis; thiamine diphosphate biosynthesis. Its function is as follows. Involved in the biosynthesis of the thiazole moiety of thiamine. Catalyzes the conversion of NAD and glycine to adenosine diphosphate 5-(2-hydroxyethyl)-4-methylthiazole-2-carboxylate (ADT), an adenylated thiazole intermediate, using free sulfide as a source of sulfur. In Methanocaldococcus jannaschii (strain ATCC 43067 / DSM 2661 / JAL-1 / JCM 10045 / NBRC 100440) (Methanococcus jannaschii), this protein is Thiamine thiazole synthase.